We begin with the raw amino-acid sequence, 214 residues long: Ribosomal RNA small subunit methyltransferase G (214 aa).

S-adenosyl-L-methionine contacts are provided by residues glycine 81, methionine 86, 132 to 133 (VE), and arginine 147.

This sequence belongs to the methyltransferase superfamily. RNA methyltransferase RsmG family.

Its subcellular location is the cytoplasm. The catalysed reaction is guanosine(527) in 16S rRNA + S-adenosyl-L-methionine = N(7)-methylguanosine(527) in 16S rRNA + S-adenosyl-L-homocysteine. Its function is as follows. Specifically methylates the N7 position of guanine in position 527 of 16S rRNA. This is Ribosomal RNA small subunit methyltransferase G from Pseudomonas aeruginosa (strain UCBPP-PA14).